The following is a 324-amino-acid chain: Antihemorrhagic factor cHLP-A (324 aa).

The N-terminal stretch at Met1–Ser19 is a signal peptide. Cystatin fetuin-A-type domains follow at residues Gln21 to Lys130 and Arg141 to Val254. Intrachain disulfides connect Cys28/Cys315, Cys85/Cys96, Cys110/Cys129, Cys143/Cys146, Cys205/Cys217, and Cys230/Cys253. Residue Asn204 is glycosylated (N-linked (GlcNAc...) asparagine). Residue Asn282 is glycosylated (N-linked (GlcNAc...) asparagine).

It belongs to the fetuin family. As to quaternary structure, homodimer. As to expression, expressed by the liver.

The protein resides in the secreted. Potent inhibitor of hemorrhagic activity but also proteolytic activities. Inhibition occurs by formation of a non-covalent complex between this protein and the proteinases at their metalloproteinase domains. This Gloydius brevicauda (Korean slamosa snake) protein is Antihemorrhagic factor cHLP-A.